Here is a 255-residue protein sequence, read N- to C-terminus: Small ribosomal subunit protein eS1B (255 aa).

A2 is modified (N-acetylalanine; partial). At S245 the chain carries Phosphoserine. K248 is covalently cross-linked (Glycyl lysine isopeptide (Lys-Gly) (interchain with G-Cter in ubiquitin)). T254 carries the phosphothreonine modification.

Belongs to the eukaryotic ribosomal protein eS1 family. As to quaternary structure, component of the small ribosomal subunit. Mature ribosomes consist of a small (40S) and a large (60S) subunit. The 40S subunit contains about 33 different proteins and 1 molecule of RNA (18S). The 60S subunit contains about 49 different proteins and 3 molecules of RNA (25S, 5.8S and 5S).

The protein resides in the cytoplasm. This chain is Small ribosomal subunit protein eS1B, found in Saccharomyces cerevisiae (strain JAY291) (Baker's yeast).